The primary structure comprises 431 residues: Lipoyl synthase 2, mitochondrial (431 aa).

The segment at 21–43 (SPLGKLQEERGEGVAKDPKKDKQ) is disordered. A compositionally biased stretch (basic and acidic residues) spans 26–40 (LQEERGEGVAKDPKK). [4Fe-4S] cluster contacts are provided by cysteine 127, cysteine 132, cysteine 138, cysteine 159, cysteine 163, cysteine 166, and serine 375. The Radical SAM core domain maps to 142-364 (DEEEGTATAT…EEEAMAMGFL (223 aa)).

It belongs to the radical SAM superfamily. Lipoyl synthase family. [4Fe-4S] cluster serves as cofactor.

The protein localises to the mitochondrion. It carries out the reaction [[Fe-S] cluster scaffold protein carrying a second [4Fe-4S](2+) cluster] + N(6)-octanoyl-L-lysyl-[protein] + 2 oxidized [2Fe-2S]-[ferredoxin] + 2 S-adenosyl-L-methionine + 4 H(+) = [[Fe-S] cluster scaffold protein] + N(6)-[(R)-dihydrolipoyl]-L-lysyl-[protein] + 4 Fe(3+) + 2 hydrogen sulfide + 2 5'-deoxyadenosine + 2 L-methionine + 2 reduced [2Fe-2S]-[ferredoxin]. The protein operates within protein modification; protein lipoylation via endogenous pathway; protein N(6)-(lipoyl)lysine from octanoyl-[acyl-carrier-protein]: step 2/2. Functionally, catalyzes the radical-mediated insertion of two sulfur atoms into the C-6 and C-8 positions of the octanoyl moiety bound to the lipoyl domains of lipoate-dependent enzymes, thereby converting the octanoylated domains into lipoylated derivatives. This Trypanosoma cruzi (strain CL Brener) protein is Lipoyl synthase 2, mitochondrial.